The following is a 209-amino-acid chain: Small ribosomal subunit protein uS3 (209 aa).

One can recognise a KH type-2 domain in the interval 38-107; it reads IRKVIKSKYA…RFIVNVEEIK (70 aa).

Belongs to the universal ribosomal protein uS3 family. Part of the 30S ribosomal subunit. Forms a tight complex with proteins S10 and S14.

Binds the lower part of the 30S subunit head. Binds mRNA in the 70S ribosome, positioning it for translation. The sequence is that of Small ribosomal subunit protein uS3 from Thermosipho melanesiensis (strain DSM 12029 / CIP 104789 / BI429).